Consider the following 744-residue polypeptide: Tripartite motif-containing protein 3 (744 aa).

Ala2 is modified (N-acetylalanine). The interval 2 to 290 (AKREDSPGPE…LAAQAFPERP (289 aa)) is interaction with KIF21B. The residue at position 7 (Ser7) is a Phosphoserine. An RING-type zinc finger spans residues 22–63 (CSICLDRYRCPKVLPCLHTFCERCLQNYIPPQSLTLSCPVCR). Residues 110 to 151 (GRPLSCPNHEGKTMEFYCEACETAMCGECRAGEHREHGTVLL) form a B box-type zinc finger. Zn(2+) contacts are provided by Cys115, His118, Cys138, and His143. Positions 153–224 (DVVEQHKAAL…RKQALVSDLE (72 aa)) form a coiled coil. Residues 317-418 (TTSATAHETV…VRGSPFRVRA (102 aa)) form a Filamin repeat. Positions 419–464 (LRPGDLPPSPDDVKRRVKSPGGPGSHVRQKAVRRPSSMYSTGGKRK) are disordered. At Ser427 the chain carries Phosphoserine. NHL repeat units follow at residues 473–516 (VFRV…FSNE), 520–563 (KFRF…FSPE), 564–605 (GKFK…FQPN), 609–652 (VGRF…YSAD), 656–699 (LFKF…FDSS), and 700–743 (GSFL…YRYL).

This sequence belongs to the TRIM/RBCC family. As to quaternary structure, forms homooligomers. Interacts with TRIM2; this interaction reduces TRIM2 activity. Associates with myosin-Vb (MYO5B) and alpha-actinin-4 (ACTN4). Component of the CART complex, at least composed of ACTN4, HGS/HRS, MYO5B and TRIM3. Interacts with ZFYVE28/LST2. Interacts with KIF21B.

It is found in the cytoplasm. The protein resides in the early endosome. Its subcellular location is the golgi apparatus. It localises to the trans-Golgi network. The protein localises to the cell projection. It is found in the dendrite. The catalysed reaction is S-ubiquitinyl-[E2 ubiquitin-conjugating enzyme]-L-cysteine + [acceptor protein]-L-lysine = [E2 ubiquitin-conjugating enzyme]-L-cysteine + N(6)-ubiquitinyl-[acceptor protein]-L-lysine.. Its function is as follows. E3 ubiquitin ligase that plays essential roles in neuronal functions such as regulation of neuronal plasticity, learning, and memory. In addition to its neuronal functions, participates in other biological processes such as innate immunity or cell cycle regulation. Component of the cytoskeleton-associated recycling or transport complex in neurons, polyubiquitinates gamma-actin, thus regulating neuronal plasticity, learning, and memory. Ubiquitinates postsynaptic scaffold GKAP, a neuronal substrate involved in synaptic remodeling and thereby modulates dendritic spine morphology. Positively regulates motility of microtubule-dependent motor protein KIF21B. Induces growth arrest via its RING-dependent E3 ligase activity and ubiquinates CDKN1A. Positively regulates TLR3-mediated signaling by mediating 'Lys-63'-linked polyubiquitination of TLR3. In turn, promotes the recognition and sorting of polyubiquitinated TLR3 by the ESCRT complexes. This Mus musculus (Mouse) protein is Tripartite motif-containing protein 3 (Trim3).